Consider the following 206-residue polypeptide: Glycerol-3-phosphate acyltransferase (206 aa).

Transmembrane regions (helical) follow at residues 14 to 34 (IALAAAVIGYLLGSIPFGLIL), 67 to 87 (ATLLLDALKASAAAWIVGYFL), 91 to 111 (AAIIAGFFAFIGHLFPVWIGF), 124 to 144 (LLGVAPIMVVLFAAVWLAVAV), and 148 to 168 (YSSLSALVAMLVIPVALLILG).

This sequence belongs to the PlsY family. Probably interacts with PlsX.

It localises to the cell inner membrane. It catalyses the reaction an acyl phosphate + sn-glycerol 3-phosphate = a 1-acyl-sn-glycero-3-phosphate + phosphate. The protein operates within lipid metabolism; phospholipid metabolism. In terms of biological role, catalyzes the transfer of an acyl group from acyl-phosphate (acyl-PO(4)) to glycerol-3-phosphate (G3P) to form lysophosphatidic acid (LPA). This enzyme utilizes acyl-phosphate as fatty acyl donor, but not acyl-CoA or acyl-ACP. This Rhizobium etli (strain ATCC 51251 / DSM 11541 / JCM 21823 / NBRC 15573 / CFN 42) protein is Glycerol-3-phosphate acyltransferase.